A 104-amino-acid polypeptide reads, in one-letter code: Ig kappa chain b5 variant C region (104 aa).

The 96-residue stretch at 5–100 (PTVLIFPPSP…SGSPVVQSFS (96 aa)) folds into the Ig-like domain. Cys26 and Cys85 are disulfide-bonded.

The chain is Ig kappa chain b5 variant C region from Oryctolagus cuniculus (Rabbit).